The sequence spans 179 residues: Large ribosomal subunit protein uL5 (179 aa).

This sequence belongs to the universal ribosomal protein uL5 family. Part of the 50S ribosomal subunit; part of the 5S rRNA/L5/L18/L25 subcomplex. Contacts the 5S rRNA and the P site tRNA. Forms a bridge to the 30S subunit in the 70S ribosome.

In terms of biological role, this is one of the proteins that bind and probably mediate the attachment of the 5S RNA into the large ribosomal subunit, where it forms part of the central protuberance. In the 70S ribosome it contacts protein S13 of the 30S subunit (bridge B1b), connecting the 2 subunits; this bridge is implicated in subunit movement. Contacts the P site tRNA; the 5S rRNA and some of its associated proteins might help stabilize positioning of ribosome-bound tRNAs. This chain is Large ribosomal subunit protein uL5, found in Histophilus somni (strain 129Pt) (Haemophilus somnus).